The primary structure comprises 615 residues: Dihydroxy-acid dehydratase (615 aa).

Asp-81 lines the Mg(2+) pocket. Cys-122 contributes to the [2Fe-2S] cluster binding site. Mg(2+) is bound by residues Asp-123 and Lys-124. Position 124 is an N6-carboxylysine (Lys-124). Residue Cys-193 coordinates [2Fe-2S] cluster. Glu-489 contacts Mg(2+). The active-site Proton acceptor is the Ser-515.

Belongs to the IlvD/Edd family. Homodimer. The cofactor is [2Fe-2S] cluster. Mg(2+) is required as a cofactor.

It carries out the reaction (2R)-2,3-dihydroxy-3-methylbutanoate = 3-methyl-2-oxobutanoate + H2O. The enzyme catalyses (2R,3R)-2,3-dihydroxy-3-methylpentanoate = (S)-3-methyl-2-oxopentanoate + H2O. It participates in amino-acid biosynthesis; L-isoleucine biosynthesis; L-isoleucine from 2-oxobutanoate: step 3/4. It functions in the pathway amino-acid biosynthesis; L-valine biosynthesis; L-valine from pyruvate: step 3/4. Functionally, functions in the biosynthesis of branched-chain amino acids. Catalyzes the dehydration of (2R,3R)-2,3-dihydroxy-3-methylpentanoate (2,3-dihydroxy-3-methylvalerate) into 2-oxo-3-methylpentanoate (2-oxo-3-methylvalerate) and of (2R)-2,3-dihydroxy-3-methylbutanoate (2,3-dihydroxyisovalerate) into 2-oxo-3-methylbutanoate (2-oxoisovalerate), the penultimate precursor to L-isoleucine and L-valine, respectively. This Pseudomonas syringae pv. syringae (strain B728a) protein is Dihydroxy-acid dehydratase.